The chain runs to 222 residues: Glutathione S-transferase A2 (222 aa).

A2 is subject to N-acetylalanine. In terms of domain architecture, GST N-terminal spans E3–G83. N6-succinyllysine is present on K4. Glutathione contacts are provided by residues Y9, R45, Q54–V55, and Q67–T68. A GST C-terminal domain is found at D85–P207. Residues Q199 to F222 are disordered. Residues P206–F222 are compositionally biased toward basic and acidic residues.

Belongs to the GST superfamily. Alpha family. In terms of assembly, homodimer or heterodimer of GSTA1 and GSTA2. Liver.

The protein localises to the cytoplasm. The catalysed reaction is RX + glutathione = an S-substituted glutathione + a halide anion + H(+). Functionally, catalyzes the conjugation of glutathione to a large variety of electrophilic compounds. The protein is Glutathione S-transferase A2 (GSTA2) of Homo sapiens (Human).